Consider the following 210-residue polypeptide: Thiamine-phosphate synthase (210 aa).

4-amino-2-methyl-5-(diphosphooxymethyl)pyrimidine contacts are provided by residues 43 to 47 and Asn-75; that span reads QLREK. Mg(2+)-binding residues include Asp-76 and Asp-95. Position 114 (Ser-114) interacts with 4-amino-2-methyl-5-(diphosphooxymethyl)pyrimidine. 140–142 serves as a coordination point for 2-[(2R,5Z)-2-carboxy-4-methylthiazol-5(2H)-ylidene]ethyl phosphate; that stretch reads TST. Lys-143 contacts 4-amino-2-methyl-5-(diphosphooxymethyl)pyrimidine. 2-[(2R,5Z)-2-carboxy-4-methylthiazol-5(2H)-ylidene]ethyl phosphate contacts are provided by residues Gly-170 and 190–191; that span reads IS.

This sequence belongs to the thiamine-phosphate synthase family. The cofactor is Mg(2+).

The catalysed reaction is 2-[(2R,5Z)-2-carboxy-4-methylthiazol-5(2H)-ylidene]ethyl phosphate + 4-amino-2-methyl-5-(diphosphooxymethyl)pyrimidine + 2 H(+) = thiamine phosphate + CO2 + diphosphate. The enzyme catalyses 2-(2-carboxy-4-methylthiazol-5-yl)ethyl phosphate + 4-amino-2-methyl-5-(diphosphooxymethyl)pyrimidine + 2 H(+) = thiamine phosphate + CO2 + diphosphate. It catalyses the reaction 4-methyl-5-(2-phosphooxyethyl)-thiazole + 4-amino-2-methyl-5-(diphosphooxymethyl)pyrimidine + H(+) = thiamine phosphate + diphosphate. The protein operates within cofactor biosynthesis; thiamine diphosphate biosynthesis; thiamine phosphate from 4-amino-2-methyl-5-diphosphomethylpyrimidine and 4-methyl-5-(2-phosphoethyl)-thiazole: step 1/1. Its function is as follows. Condenses 4-methyl-5-(beta-hydroxyethyl)thiazole monophosphate (THZ-P) and 2-methyl-4-amino-5-hydroxymethyl pyrimidine pyrophosphate (HMP-PP) to form thiamine monophosphate (TMP). This chain is Thiamine-phosphate synthase, found in Clostridioides difficile (strain 630) (Peptoclostridium difficile).